A 156-amino-acid polypeptide reads, in one-letter code: Small ribosomal subunit protein uS7 (156 aa).

This sequence belongs to the universal ribosomal protein uS7 family. Part of the 30S ribosomal subunit. Contacts proteins S9 and S11.

Functionally, one of the primary rRNA binding proteins, it binds directly to 16S rRNA where it nucleates assembly of the head domain of the 30S subunit. Is located at the subunit interface close to the decoding center, probably blocks exit of the E-site tRNA. The protein is Small ribosomal subunit protein uS7 of Rhodobacter capsulatus (Rhodopseudomonas capsulata).